Here is a 200-residue protein sequence, read N- to C-terminus: 7-methyl-GTP pyrophosphatase (200 aa).

Catalysis depends on D75, which acts as the Proton acceptor.

This sequence belongs to the Maf family. YceF subfamily. A divalent metal cation is required as a cofactor.

It localises to the cytoplasm. It carries out the reaction N(7)-methyl-GTP + H2O = N(7)-methyl-GMP + diphosphate + H(+). In terms of biological role, nucleoside triphosphate pyrophosphatase that hydrolyzes 7-methyl-GTP (m(7)GTP). May have a dual role in cell division arrest and in preventing the incorporation of modified nucleotides into cellular nucleic acids. The protein is 7-methyl-GTP pyrophosphatase of Hydrogenovibrio crunogenus (strain DSM 25203 / XCL-2) (Thiomicrospira crunogena).